Reading from the N-terminus, the 392-residue chain is Succinate--CoA ligase [ADP-forming] subunit beta (392 aa).

One can recognise an ATP-grasp domain in the interval 9-247 (KAILRKYGVA…VTEEDPLEVE (239 aa)). Residues Lys49, 56 to 58 (GRG), Glu102, Leu105, and Glu110 each bind ATP. Positions 202 and 216 each coordinate Mg(2+). Residues Asn267 and 324 to 326 (GIL) contribute to the substrate site.

The protein belongs to the succinate/malate CoA ligase beta subunit family. In terms of assembly, heterotetramer of two alpha and two beta subunits. Mg(2+) is required as a cofactor.

It carries out the reaction succinate + ATP + CoA = succinyl-CoA + ADP + phosphate. The enzyme catalyses GTP + succinate + CoA = succinyl-CoA + GDP + phosphate. It participates in carbohydrate metabolism; tricarboxylic acid cycle; succinate from succinyl-CoA (ligase route): step 1/1. Succinyl-CoA synthetase functions in the citric acid cycle (TCA), coupling the hydrolysis of succinyl-CoA to the synthesis of either ATP or GTP and thus represents the only step of substrate-level phosphorylation in the TCA. The beta subunit provides nucleotide specificity of the enzyme and binds the substrate succinate, while the binding sites for coenzyme A and phosphate are found in the alpha subunit. In Koribacter versatilis (strain Ellin345), this protein is Succinate--CoA ligase [ADP-forming] subunit beta.